A 465-amino-acid polypeptide reads, in one-letter code: MGSKTAENESQGGGNAPPSSTKATATGGEPRGAHWSRDGDGTLGEGEGDDDADGDNTSCAPAVPLNPQTAPSTNSKKRKKRPKKKTSALKQSSPPRIPLADLFPDHQYPHGEAQVYEPGLENVARTTADEVRHHSRHHIEDDTFLNDYRKAAEVHRQVRRWTQESVRPGQTLTEIAMGIEDGVRALLDNAGLDTGQGLISGLGFPTGLSLNNCVAHYTPNPGQREVVLDSSDVMKVDFGVHINGWIVDSAFTMSFDPTYDNLLAAVKDATNTGIKNAGVDVRISDVSAAIQEAMESYEVDINGRTFPVKAVRNITGHNIEQYRIHAGKSIPFVKNNDNTKMEEGEIFAIETFGTTGRGYLFDGPGVYGYGKDPSAPKRITSHLASAKSLYQKINENFGSLVFCRRYLERLGVESYLAGMNNLVSNGYVEVYQPLMDVRGSYSAQFEHTILLRESCKEVISRGDDY.

A disordered region spans residues 1–100 (MGSKTAENES…QSSPPRIPLA (100 aa)). Residues 31–40 (RGAHWSRDGD) are compositionally biased toward basic and acidic residues. Basic residues predominate over residues 75–87 (SKKRKKRPKKKTS). His-216 lines the substrate pocket. Positions 237, 248, and 317 each coordinate a divalent metal cation. Residue His-325 participates in substrate binding. Positions 350 and 446 each coordinate a divalent metal cation.

The protein belongs to the peptidase M24A family. Methionine aminopeptidase eukaryotic type 2 subfamily. It depends on Co(2+) as a cofactor. Zn(2+) is required as a cofactor. The cofactor is Mn(2+). Requires Fe(2+) as cofactor.

The protein localises to the cytoplasm. The enzyme catalyses Release of N-terminal amino acids, preferentially methionine, from peptides and arylamides.. In terms of biological role, cotranslationally removes the N-terminal methionine from nascent proteins. The N-terminal methionine is often cleaved when the second residue in the primary sequence is small and uncharged (Met-Ala-, Cys, Gly, Pro, Ser, Thr, or Val). This Penicillium rubens (strain ATCC 28089 / DSM 1075 / NRRL 1951 / Wisconsin 54-1255) (Penicillium chrysogenum) protein is Methionine aminopeptidase 2-1.